The primary structure comprises 1257 residues: Probable aldehyde oxidase gad-3 (1257 aa).

The region spanning 4–91 is the 2Fe-2S ferredoxin-type domain; the sequence is TGIFFNVNGK…KTFVITVEGV (88 aa). Positions 43, 48, 51, and 73 each coordinate [2Fe-2S] cluster. An FAD-binding PCMH-type domain is found at 229–459; that stretch reads LKGDRIELLL…TSLEVHIDAL (231 aa). Glutamate 1208 serves as the catalytic Proton acceptor.

Belongs to the xanthine dehydrogenase family. [2Fe-2S] cluster is required as a cofactor. The cofactor is FAD. Requires Mo-molybdopterin as cofactor.

It carries out the reaction an aldehyde + O2 + H2O = a carboxylate + H2O2 + H(+). In terms of biological role, may be involved in the metabolism of 1-methylnicotinamide (MNA). Linked to regulation of longevity through generation of reactive oxygen species, where it probably functions in a pathway downstream of the sirtuin sir-2.1 and the nicotinamide N-methyltransferase anmt-1. This is Probable aldehyde oxidase gad-3 from Caenorhabditis elegans.